A 205-amino-acid chain; its full sequence is Guanylate kinase (205 aa).

The Guanylate kinase-like domain occupies Gly-5–Glu-184. Gly-12–Gly-19 serves as a coordination point for ATP.

This sequence belongs to the guanylate kinase family.

It is found in the cytoplasm. The catalysed reaction is GMP + ATP = GDP + ADP. Its function is as follows. Essential for recycling GMP and indirectly, cGMP. The polypeptide is Guanylate kinase (Listeria monocytogenes serotype 4b (strain F2365)).